Reading from the N-terminus, the 273-residue chain is MKKYYDIIENAYLKKNEVNTKNIDIETKQTIHHVIELLNSGKIRVAEKKDNIWITNQWIKKSILLYMYLNQNNVFQGSFSNYYDKIPLKYENYNEKKFKEERIRVVPPATIRYGSFINSNTIIMPSYVNIGAYVDQGTMIDTWTTVGSCAQIGKNVHLSGGVGIGGVLEPLQNNPTIIEDNCFIGARSEIVEGVIIEEGSVISMGVFIGQSTKIYNRETGEILYGRVPANSVVVSGSLPSKDRKYNLYAAVIVKRVDSKTLNKVEINQLLRDK.

Substrate is bound by residues arginine 104 and aspartate 141.

This sequence belongs to the transferase hexapeptide repeat family. Homotrimer.

The protein resides in the cytoplasm. The enzyme catalyses (S)-2,3,4,5-tetrahydrodipicolinate + succinyl-CoA + H2O = (S)-2-succinylamino-6-oxoheptanedioate + CoA. Its pathway is amino-acid biosynthesis; L-lysine biosynthesis via DAP pathway; LL-2,6-diaminopimelate from (S)-tetrahydrodipicolinate (succinylase route): step 1/3. The polypeptide is 2,3,4,5-tetrahydropyridine-2,6-dicarboxylate N-succinyltransferase (Buchnera aphidicola subsp. Schizaphis graminum (strain Sg)).